The following is a 357-amino-acid chain: Mannonate dehydratase (357 aa).

Belongs to the mannonate dehydratase family. The cofactor is Fe(2+). It depends on Mn(2+) as a cofactor.

It carries out the reaction D-mannonate = 2-dehydro-3-deoxy-D-gluconate + H2O. It participates in carbohydrate metabolism; pentose and glucuronate interconversion. Functionally, catalyzes the dehydration of D-mannonate. This chain is Mannonate dehydratase, found in Enterococcus faecalis (strain ATCC 700802 / V583).